We begin with the raw amino-acid sequence, 423 residues long: MSKNCPECGSSRVVEDDLYSQKQWVCEDCGSVVSEGLLTTTLSEESHSRAVPFFTSTAAFKKPCRNLVSGFSRLRALCRIFRLSSSMEDASANLFERAYNHPNFLHISLSKKQILAGCCMFHICRQNSWPVFMGTIGYLLDADNYQMGTIYQELTKSLNLQTTQVCITRMLESFCYDFKLAPDEVEEVFSVAQQRLVDQTSALLELAADTWILTGRRPFPLFLAAVYVAWQSLNPLARMKYSLMKFCKIAKAPEQLWCKSKDTINKRLNELLEVLCKLGRELPWVRPTDIQMNTVTTLVEDILKHRKALLILAVKHYEKQLEETQTSQYSESELSDSKSSVQTQCKSPPDEEDEGCELPPDHWGKRHLFLPPCVRTQKRQKINEAPLEVTGDEDISDSEIESYIRSEEEIKLFAKARKKICKY.

The TFIIB-type zinc-finger motif lies at 1 to 34 (MSKNCPECGSSRVVEDDLYSQKQWVCEDCGSVVS). Residues C5, C8, C26, and C29 each contribute to the Zn(2+) site. Repeat 2 spans residues 171-245 (LESFCYDFKL…LARMKYSLMK (75 aa)). Residues 325–340 (QTSQYSESELSDSKSS) show a composition bias toward low complexity. The tract at residues 325–358 (QTSQYSESELSDSKSSVQTQCKSPPDEEDEGCEL) is disordered. At C373 the chain carries Cysteine sulfenic acid (-SOH).

The protein belongs to the TFIIB family. Component of TFIIIB complexes. Interacts with TBP and forms a ternary complex with TBp and target DNA sequences. In response to oxidative stress, a Cys-residue is reversibly oxidized to cysteine sulfenic acid. This impairs formation of a ternary complex with TBP and DNA and down-regulates expression of target genes in response to oxidative stress.

The protein resides in the nucleus. In terms of biological role, general activator of RNA polymerase III transcription. Factor exclusively required for RNA polymerase III transcription of genes with promoter elements upstream of the initiation sites. Contributes to the regulation of gene expression; functions as activator in the absence of oxidative stress. Down-regulates expression of target genes in response to oxidative stress. Overexpression protects cells against apoptosis in response to oxidative stress. This is Transcription factor IIIB 50 kDa subunit (brf2) from Danio rerio (Zebrafish).